Here is a 495-residue protein sequence, read N- to C-terminus: Lysine--tRNA ligase (495 aa).

2 residues coordinate Mg(2+): E406 and E413.

The protein belongs to the class-II aminoacyl-tRNA synthetase family. In terms of assembly, homodimer. The cofactor is Mg(2+).

The protein localises to the cytoplasm. It catalyses the reaction tRNA(Lys) + L-lysine + ATP = L-lysyl-tRNA(Lys) + AMP + diphosphate. This is Lysine--tRNA ligase from Leptospira interrogans serogroup Icterohaemorrhagiae serovar Lai (strain 56601).